The chain runs to 428 residues: Putative UPF0496 protein 5 (428 aa).

Over residues 1–14 (MGNRHGIMRPRRLA) the composition is skewed to basic residues. A disordered region spans residues 1–40 (MGNRHGIMRPRRLASGRSAAAAEEEGEDGEGEPGSYEAAC). Residues 22 to 31 (AEEEGEDGEG) are compositionally biased toward acidic residues. Transmembrane regions (helical) follow at residues 229–249 (IVFLTAFAALLVCSVVAAAIA) and 252–272 (PVAAALAPAASMPVGSAGKWM).

The protein belongs to the UPF0496 family.

It localises to the membrane. The sequence is that of Putative UPF0496 protein 5 from Oryza sativa subsp. indica (Rice).